A 581-amino-acid chain; its full sequence is Proline--tRNA ligase (581 aa).

Belongs to the class-II aminoacyl-tRNA synthetase family. ProS type 1 subfamily. Homodimer.

The protein localises to the cytoplasm. The enzyme catalyses tRNA(Pro) + L-proline + ATP = L-prolyl-tRNA(Pro) + AMP + diphosphate. In terms of biological role, catalyzes the attachment of proline to tRNA(Pro) in a two-step reaction: proline is first activated by ATP to form Pro-AMP and then transferred to the acceptor end of tRNA(Pro). As ProRS can inadvertently accommodate and process non-cognate amino acids such as alanine and cysteine, to avoid such errors it has two additional distinct editing activities against alanine. One activity is designated as 'pretransfer' editing and involves the tRNA(Pro)-independent hydrolysis of activated Ala-AMP. The other activity is designated 'posttransfer' editing and involves deacylation of mischarged Ala-tRNA(Pro). The misacylated Cys-tRNA(Pro) is not edited by ProRS. The chain is Proline--tRNA ligase from Chlamydia trachomatis serovar D (strain ATCC VR-885 / DSM 19411 / UW-3/Cx).